The primary structure comprises 194 residues: MRLCDTHIEEYLDAGKIVITPRPPKSAISGVSVDIRLGNEFRVFSEHTTPYIDLSGPKEEVSSALDKVMSEPIIIAKNESFFLHPGELALAVTYENVTLPDDIVGWLDGRSSLARLGLMVHVTAHRIDPGWSGKIVLEFYNSGKIPLALRPEMTIAALNFEVLSAPAARPYNKRVDAKYQVQQGAVASRINQDN.

DCTP-binding positions include 110–115 (RSSLAR), Asp128, 136–138 (VLE), Tyr171, Lys178, and Gln182. The active-site Proton donor/acceptor is the Glu138.

Belongs to the dCTP deaminase family. Homotrimer.

The catalysed reaction is dCTP + H2O + H(+) = dUTP + NH4(+). Its pathway is pyrimidine metabolism; dUMP biosynthesis; dUMP from dCTP (dUTP route): step 1/2. In terms of biological role, catalyzes the deamination of dCTP to dUTP. The sequence is that of dCTP deaminase from Psychromonas ingrahamii (strain DSM 17664 / CCUG 51855 / 37).